A 510-amino-acid chain; its full sequence is Calcium-dependent lipid-binding protein (510 aa).

A helical membrane pass occupies residues 1–21; that stretch reads MGLISGILFGIIFGVALMAGW. 2 consecutive SMP-LTD domains span residues 66–248 and 66–250; these read AFEQ…VPIG and AFEQ…IGGI. Residues 226–488 form a phospholipid binding region; the sequence is DDTVDTIVKD…FMGRTITGQS (263 aa). 2 C2 domains span residues 242–362 and 246–364; these read RIVV…ELEL and PIGG…ELNL. Ca(2+)-binding residues include lysine 278, glutamate 279, aspartate 285, aspartate 333, lysine 334, aspartate 335, aspartate 339, and glutamate 340. Residues 390 to 417 adopt a coiled-coil conformation; that stretch reads EFNKEEQMAALEDEKKIMEERKRLKEAG. In terms of domain architecture, C2 3 spans 461–500; it reads MVGSGFGAVGSGLSKAGRFMGRTITGQSSKRSGSSTPVNT. A disordered region spans residues 484 to 510; that stretch reads ITGQSSKRSGSSTPVNTVPENDGAKQQ.

The protein belongs to the synaptotagmin family. Interacts with the biotrophic pathogenic fungi Microbotryum violaceum effector MVLG_01732. The cofactor is Ca(2+). Mostly expressed in rosette leaves and flowers, to lower extent, in cauline leaves, roots and stems, and, at low levels, in siliques.

Its subcellular location is the nucleus membrane. In terms of biological role, may be involved in membrane trafficking. Acts as a repressor of abiotic stress (e.g. drought and salt) responses by binding specifically to the promoter of THAS1 to regulate its transcription. Binds to membrane lipid ceramides. In Arabidopsis thaliana (Mouse-ear cress), this protein is Calcium-dependent lipid-binding protein.